A 233-amino-acid chain; its full sequence is Cysteine-rich venom protein (233 aa).

Residues 1–12 form the signal peptide; it reads PILAAVLQQSSG. In terms of domain architecture, SCP spans 31 to 159; it reads VDLHNSLRRS…PYSYFFVCQY (129 aa). 8 cysteine pairs are disulfide-bonded: Cys68–Cys146, Cys85–Cys160, Cys141–Cys157, Cys179–Cys186, Cys182–Cys191, Cys195–Cys228, Cys204–Cys222, and Cys213–Cys226. Residues 195 to 228 enclose the ShKT domain; sequence CTRENKFTNCNTMVQQSSCQDNYMKTNCPASCFC.

Belongs to the CRISP family. Expressed by the venom gland.

Its subcellular location is the secreted. In terms of biological role, blocks contraction of smooth muscle elicited by high potassium-induced depolarization, but does not block caffeine-stimulated contraction. May target voltage-gated calcium channels on smooth muscle. This Trimeresurus stejnegeri (Chinese green tree viper) protein is Cysteine-rich venom protein.